The primary structure comprises 184 residues: Structural protein V8 (184 aa).

The interval Ile-14 to Leu-35 is disordered.

This sequence belongs to the sputnik virus V6 family.

Its subcellular location is the virion. The protein is Structural protein V8 of Sputnik virophage.